A 458-amino-acid chain; its full sequence is Maturase-like protein 1 (458 aa).

To group II intron maturases.

The protein resides in the plastid. Its subcellular location is the chloroplast. In terms of biological role, could be required for group III intron excision. In Euglena gracilis, this protein is Maturase-like protein 1 (mat1).